The primary structure comprises 344 residues: Trace amine-associated receptor 8b (344 aa).

Over 1 to 33 the chain is Extracellular; sequence MTSNFSQATLQLCYENVNASCIKTPYSPGLRVL. N-linked (GlcNAc...) asparagine glycosylation is found at N4 and N18. Intrachain disulfides connect C21–C185 and C104–C189. A helical transmembrane segment spans residues 34 to 54; sequence LYMVFGFGAVLAVCGNLLVVI. Topologically, residues 55–67 are cytoplasmic; that stretch reads SVLHFKQLHSPAN. Residues 68-88 form a helical membrane-spanning segment; it reads FLIASLASADFLVGISVMPFS. Topologically, residues 89–102 are extracellular; sequence MVRSIESCWYFGDT. The chain crosses the membrane as a helical span at residues 103 to 127; that stretch reads FCSLHSCCDAAFCYSSLFHLCFISV. Residues 128-146 lie on the Cytoplasmic side of the membrane; it reads DRYIAVTEPLVYPTKFTMS. A helical transmembrane segment spans residues 147–167; sequence VSGICISISWILPLVYSSAVF. The Extracellular segment spans residues 168-196; it reads YTGISATGIENLVSALNCVGGCQVAINQD. The chain crosses the membrane as a helical span at residues 197–217; the sequence is WVLISFLLFFIPTLVMIILYS. The Cytoplasmic portion of the chain corresponds to 218-256; that stretch reads KIFLVAKQQAVKIETSISGSKGESSLESHKARVAKRERK. The helical transmembrane segment at 257–277 threads the bilayer; that stretch reads AAKTLGVTVMAFMVSWLPYTI. Topologically, residues 278 to 295 are extracellular; it reads DTLIDAFMGFITPAYVYE. A helical transmembrane segment spans residues 296-319; sequence ICGWIAYYNSAMNPLIYAFFYPWF. Topologically, residues 320–344 are cytoplasmic; it reads RKAIKLILSGKILKGHSSTTSLFSE.

Belongs to the G-protein coupled receptor 1 family.

Its subcellular location is the cell membrane. Its function is as follows. Olfactory receptor activated by trace amines. Trace amine compounds are enriched in animal body fluids and act on trace amine-associated receptors (TAARs) to elicit both intraspecific and interspecific innate behaviors. Ligand-binding causes a conformation change that triggers signaling via G(s)-class of G alpha proteins (GNAL or GNAS). The chain is Trace amine-associated receptor 8b from Rattus norvegicus (Rat).